A 165-amino-acid polypeptide reads, in one-letter code: Protein SprT (165 aa).

The region spanning 22 to 163 (LAQANLKLGR…RCVHCGEQLT (142 aa)) is the SprT-like domain. H78 contacts Zn(2+). The active site involves E79. H82 contacts Zn(2+).

This sequence belongs to the SprT family. The cofactor is Zn(2+).

It localises to the cytoplasm. The chain is Protein SprT from Escherichia fergusonii (strain ATCC 35469 / DSM 13698 / CCUG 18766 / IAM 14443 / JCM 21226 / LMG 7866 / NBRC 102419 / NCTC 12128 / CDC 0568-73).